A 462-amino-acid chain; its full sequence is Sensor histidine kinase ZraS (462 aa).

The Cytoplasmic portion of the chain corresponds to 1–14; it reads MNVMRLSKDSVAVG. A helical transmembrane segment spans residues 15–35; the sequence is LSWLLTGLILLLVCLFSALIV. Residues 36-197 are Periplasmic-facing; it reads RDYGRENEAA…ADHARGLRNM (162 aa). The helical transmembrane segment at 198 to 218 threads the bilayer; sequence VIMLCAAGVVMAATVLAQFWF. Residues 219 to 462 are Cytoplasmic-facing; the sequence is RRYQRSRKQL…VNGQQKDEQG (244 aa). The 209-residue stretch at 247–455 folds into the Histidine kinase domain; it reads GVAHEIRNPL…LFTFYLPVNG (209 aa). Position 250 is a phosphohistidine; by autocatalysis (H250).

In terms of processing, autophosphorylated.

The protein resides in the cell inner membrane. The catalysed reaction is ATP + protein L-histidine = ADP + protein N-phospho-L-histidine.. Its activity is regulated as follows. Activity of the ZraS/ZraR two-component system is repressed by the zinc-bound form of ZraP, which probably interacts with the periplasmic region of ZraS. Its function is as follows. Part of the Zra signaling pathway, an envelope stress response (ESR) system composed of the periplasmic accessory protein ZraP, the histidine kinase ZraS and the transcriptional regulator ZraR. The ZraPSR system contributes to antibiotic resistance and is important for membrane integrity in the presence of membrane-targeting biocides. ZraS is a member of the two-component regulatory system ZraS/ZraR. Functions as a membrane-associated sensor kinase that phosphorylates ZraR in response to high concentrations of Zn(2+) or Pb(2+) in the medium. The sequence is that of Sensor histidine kinase ZraS (zraS) from Klebsiella oxytoca.